The following is a 165-amino-acid chain: SsrA-binding protein (165 aa).

It belongs to the SmpB family.

It localises to the cytoplasm. Its function is as follows. Required for rescue of stalled ribosomes mediated by trans-translation. Binds to transfer-messenger RNA (tmRNA), required for stable association of tmRNA with ribosomes. tmRNA and SmpB together mimic tRNA shape, replacing the anticodon stem-loop with SmpB. tmRNA is encoded by the ssrA gene; the 2 termini fold to resemble tRNA(Ala) and it encodes a 'tag peptide', a short internal open reading frame. During trans-translation Ala-aminoacylated tmRNA acts like a tRNA, entering the A-site of stalled ribosomes, displacing the stalled mRNA. The ribosome then switches to translate the ORF on the tmRNA; the nascent peptide is terminated with the 'tag peptide' encoded by the tmRNA and targeted for degradation. The ribosome is freed to recommence translation, which seems to be the essential function of trans-translation. This is SsrA-binding protein from Parvibaculum lavamentivorans (strain DS-1 / DSM 13023 / NCIMB 13966).